A 160-amino-acid chain; its full sequence is Protein TCP17 (160 aa).

Its subcellular location is the cytoplasm. The polypeptide is Protein TCP17 (Trypanosoma cruzi).